The chain runs to 159 residues: MSSQPAADDVIGCLAAVYDWAESFDTKDWDRLRTVLAPTMRIDYTQVMGKIWESMPADDFIPLASDPKFLGNPLLKTQHFIGASKWEKTSDDEITGRHQVRVAHQRYADSGMKEVAKKGHAHGGATTWFKRVDGVWKFAGLCPDIRWSEYNYDEMFGEN.

Active-site residues include His-79 and His-104.

It belongs to the scytalone dehydratase family. As to quaternary structure, homotrimer. Each subunit contains an active site, located in the central part of the hydrophobic core of the monomer, which functions independently.

The protein operates within secondary metabolite biosynthesis. Its function is as follows. Dehydratase; part of the gene cluster that mediates the biosynthesis of dibenzodioxocinones such as pestalotiollide B, a novel class of inhibitors against cholesterol ester transfer protein (CEPT). The biosynthesis initiates from condensation of acetate and malonate units catalyzed by the non-reducing PKS pks8/GME11356. Pks8/GME11356 lacks a thioesterase (TE) domain, which is important to the cyclizing of the third ring of atrochrysone carboxylic acid, and the esterase GME11355 might play the role of TE and catalyzes the cyclization reaction of the C ring. The lactamase-like protein GME11357 (or other beta-lactamases in Pestalotiopsis microspora) probably hydrolyzes the thioester bond between the ACP of pks8/GME11356 and the intermediate to release atrochrysone carboxylic acid, which is spontaneously dehydrates to form endocrocin anthrone. Endocrocin anthrone is further converted to emodin via the endocrocin intermediate. Emodin is then oxidized by several enzymes such as the Baeyer-Villiger oxidase GME11358, the oxidoreductase GME11367, the short chain dehydrogenase/reductase GME11373, as well as by other oxidoreductases from the cluster, to modify the A and C rings and open the B ring, and finally yield monodictyphenone. The prenyltransferase GME11375 may catalyze the addition reaction between the C5 side chains and the carbon bone of dibenzodioxocinones. The remaining biochemical reactions to the final product dibenzodioxocinones should be methylation catalyzed by methyltransferase GME11366 and reduction and lactonization reaction catalyzed by a series of oxidordeuctases. The polypeptide is Dehydratase GME11372 (Pestalotiopsis microspora).